The primary structure comprises 244 residues: 3-deoxy-manno-octulosonate cytidylyltransferase (244 aa).

Belongs to the KdsB family.

The protein resides in the cytoplasm. It carries out the reaction 3-deoxy-alpha-D-manno-oct-2-ulosonate + CTP = CMP-3-deoxy-beta-D-manno-octulosonate + diphosphate. The protein operates within nucleotide-sugar biosynthesis; CMP-3-deoxy-D-manno-octulosonate biosynthesis; CMP-3-deoxy-D-manno-octulosonate from 3-deoxy-D-manno-octulosonate and CTP: step 1/1. Its pathway is bacterial outer membrane biogenesis; lipopolysaccharide biosynthesis. In terms of biological role, activates KDO (a required 8-carbon sugar) for incorporation into bacterial lipopolysaccharide in Gram-negative bacteria. The polypeptide is 3-deoxy-manno-octulosonate cytidylyltransferase (Rickettsia canadensis (strain McKiel)).